Here is a 701-residue protein sequence, read N- to C-terminus: DNA ligase (701 aa).

Residues 50-54, 99-100, and Glu130 each bind NAD(+); these read DYEYD and SL. Residue Lys132 is the N6-AMP-lysine intermediate of the active site. NAD(+) is bound by residues Arg153, Glu187, Lys301, and Lys325. Cys419, Cys422, Cys437, and Cys442 together coordinate Zn(2+). In terms of domain architecture, BRCT spans 626 to 701; it reads NEHQKYMNKT…EIITEPFWDN (76 aa).

Belongs to the NAD-dependent DNA ligase family. LigA subfamily. Requires Mg(2+) as cofactor. Mn(2+) is required as a cofactor.

The enzyme catalyses NAD(+) + (deoxyribonucleotide)n-3'-hydroxyl + 5'-phospho-(deoxyribonucleotide)m = (deoxyribonucleotide)n+m + AMP + beta-nicotinamide D-nucleotide.. Its function is as follows. DNA ligase that catalyzes the formation of phosphodiester linkages between 5'-phosphoryl and 3'-hydroxyl groups in double-stranded DNA using NAD as a coenzyme and as the energy source for the reaction. It is essential for DNA replication and repair of damaged DNA. This is DNA ligase from Malacoplasma penetrans (strain HF-2) (Mycoplasma penetrans).